The chain runs to 1033 residues: Calcium-transporting ATPase 3, plasma membrane-type (1033 aa).

Residues 1–180 lie on the Cytoplasmic side of the membrane; that stretch reads MHSGVNGCCP…FVWEALEDTT (180 aa). Helical transmembrane passes span 181–201 and 204–224; these read LIIL…TEGW and GAHD…VTGT. Residues 225–268 are Cytoplasmic-facing; the sequence is SNYQQSLQFRDLDKEKRKILVQVTRNGLRQRVLIDDLLPGDAVH. 2 helical membrane-spanning segments follow: residues 269–289 and 362–382; these read LAVG…SVLV and IGKI…QGII. Residues 383-405 lie on the Cytoplasmic side of the membrane; it reads GQKYLDGLLLSWSGDDVLEILDH. A helical membrane pass occupies residues 406-426; it reads FAVAVTIVVVAVPEGLPLAVT. Catalysis depends on Asp-461, which acts as the 4-aspartylphosphate intermediate. Positions 762 and 766 each coordinate Mg(2+). A helical membrane pass occupies residues 823 to 843; it reads FQLTVNVVALLVNFTSACFTG. The Cytoplasmic portion of the chain corresponds to 844-846; sequence DAP. Helical transmembrane passes span 847–867 and 928–948; these read LTAV…ALAL and IVLN…NEIS. Residues 949–965 are Cytoplasmic-facing; it reads SREMEDINVLRGMAGNS. 2 helical membrane-spanning segments follow: residues 966 to 986 and 999 to 1019; these read IFLG…QFLG and WLIS…IKLI. Over 1020–1033 the chain is Cytoplasmic; it reads AVEPHEKADTRRTP.

This sequence belongs to the cation transport ATPase (P-type) (TC 3.A.3) family. Type IIB subfamily.

It localises to the membrane. It carries out the reaction Ca(2+)(in) + ATP + H2O = Ca(2+)(out) + ADP + phosphate + H(+). With respect to regulation, activated by calmodulin. This magnesium-dependent enzyme catalyzes the hydrolysis of ATP coupled with the translocation of calcium from the cytosol out of the cell, into the endoplasmic reticulum, or into organelles. The protein is Calcium-transporting ATPase 3, plasma membrane-type of Oryza sativa subsp. japonica (Rice).